The sequence spans 293 residues: ATP synthase gamma chain (293 aa).

It belongs to the ATPase gamma chain family. As to quaternary structure, F-type ATPases have 2 components, CF(1) - the catalytic core - and CF(0) - the membrane proton channel. CF(1) has five subunits: alpha(3), beta(3), gamma(1), delta(1), epsilon(1). CF(0) has three main subunits: a, b and c.

The protein localises to the cell inner membrane. Produces ATP from ADP in the presence of a proton gradient across the membrane. The gamma chain is believed to be important in regulating ATPase activity and the flow of protons through the CF(0) complex. The protein is ATP synthase gamma chain of Nitrosospira multiformis (strain ATCC 25196 / NCIMB 11849 / C 71).